The sequence spans 211 residues: Glycerol-3-phosphate acyltransferase (211 aa).

4 consecutive transmembrane segments (helical) span residues 5–25 (ALGM…ILFC), 80–100 (PLYL…PVFF), 112–132 (FGAI…TWLL), and 138–158 (GYSS…VWWF).

The protein belongs to the PlsY family. Probably interacts with PlsX.

It localises to the cell inner membrane. It carries out the reaction an acyl phosphate + sn-glycerol 3-phosphate = a 1-acyl-sn-glycero-3-phosphate + phosphate. The protein operates within lipid metabolism; phospholipid metabolism. In terms of biological role, catalyzes the transfer of an acyl group from acyl-phosphate (acyl-PO(4)) to glycerol-3-phosphate (G3P) to form lysophosphatidic acid (LPA). This enzyme utilizes acyl-phosphate as fatty acyl donor, but not acyl-CoA or acyl-ACP. The polypeptide is Glycerol-3-phosphate acyltransferase (Pectobacterium carotovorum subsp. carotovorum (strain PC1)).